Consider the following 166-residue polypeptide: Lipoprotein signal peptidase (166 aa).

4 helical membrane-spanning segments follow: residues 10–30 (GGALAPWLGISLIVILFDQLT), 46–66 (LTPFFNLTLIYNRGAAFGFLA), 71–91 (WQRWAFTALGIGATLVICYLL), and 100–120 (FSLSLALILGGALGNVIDRLI). Residues Asp126 and Asp144 contribute to the active site. Residues 135-155 (WHWPAFNLADSAITVGAVLLI) traverse the membrane as a helical segment.

Belongs to the peptidase A8 family.

The protein resides in the cell inner membrane. The enzyme catalyses Release of signal peptides from bacterial membrane prolipoproteins. Hydrolyzes -Xaa-Yaa-Zaa-|-(S,diacylglyceryl)Cys-, in which Xaa is hydrophobic (preferably Leu), and Yaa (Ala or Ser) and Zaa (Gly or Ala) have small, neutral side chains.. It participates in protein modification; lipoprotein biosynthesis (signal peptide cleavage). Its function is as follows. This protein specifically catalyzes the removal of signal peptides from prolipoproteins. In Burkholderia thailandensis (strain ATCC 700388 / DSM 13276 / CCUG 48851 / CIP 106301 / E264), this protein is Lipoprotein signal peptidase.